The following is a 166-amino-acid chain: Lipoprotein signal peptidase (166 aa).

4 helical membrane-spanning segments follow: residues 10-30 (GGAL…DQLT), 46-66 (LTPF…GFLA), 71-91 (WQRW…CYLL), and 100-120 (FSLS…DRLI). Catalysis depends on residues D126 and D144. A helical membrane pass occupies residues 135–155 (WHWPAFNLADSAITVGAVLLI).

Belongs to the peptidase A8 family.

It is found in the cell inner membrane. It carries out the reaction Release of signal peptides from bacterial membrane prolipoproteins. Hydrolyzes -Xaa-Yaa-Zaa-|-(S,diacylglyceryl)Cys-, in which Xaa is hydrophobic (preferably Leu), and Yaa (Ala or Ser) and Zaa (Gly or Ala) have small, neutral side chains.. It functions in the pathway protein modification; lipoprotein biosynthesis (signal peptide cleavage). Functionally, this protein specifically catalyzes the removal of signal peptides from prolipoproteins. The protein is Lipoprotein signal peptidase of Burkholderia thailandensis (strain ATCC 700388 / DSM 13276 / CCUG 48851 / CIP 106301 / E264).